We begin with the raw amino-acid sequence, 423 residues long: MLDIKKIRADFDGVAAKLATRGVEKEKLEKLHDLDIKRRELIVKSEALKAERNSVSDEISQVKRAKGDASAQIAAMQKVSAEIKAIDAELAEIEENLNEIIIMLPNLPHESTPIGADEDDNVEVRRVGQTPTFNFEPKAHWDLGEDLGILDWERGGKVTGSRFLFYKGAGARLERALYNFMLDEHGKEGYTEMITPYMVNQESMFGTGQYPKFKEDTFELKDDRGFVLIPTAEVPLTNYYRGEILDGAELPIKFTAMSPSFRSEAGSAGRDTRGLIRLHQFHKVEMVKFAKPDQSYDELEKMTANAENILQKLGLAYRVVALSTGDMGFSAAKTYDLEVWIPAQNTYREISSCSNCEDFQARRAQIRYRDEEGKVQLLHTLNGSGLAVGRTVAAILENYQNEDGSITVPEVLRPYMGGLEVIK.

231–233 (TAE) lines the L-serine pocket. Residue 262–264 (RSE) coordinates ATP. E285 contacts L-serine. ATP is bound at residue 349–352 (EISS). S384 provides a ligand contact to L-serine.

Belongs to the class-II aminoacyl-tRNA synthetase family. Type-1 seryl-tRNA synthetase subfamily. Homodimer. The tRNA molecule binds across the dimer.

The protein localises to the cytoplasm. It carries out the reaction tRNA(Ser) + L-serine + ATP = L-seryl-tRNA(Ser) + AMP + diphosphate + H(+). It catalyses the reaction tRNA(Sec) + L-serine + ATP = L-seryl-tRNA(Sec) + AMP + diphosphate + H(+). It participates in aminoacyl-tRNA biosynthesis; selenocysteinyl-tRNA(Sec) biosynthesis; L-seryl-tRNA(Sec) from L-serine and tRNA(Sec): step 1/1. In terms of biological role, catalyzes the attachment of serine to tRNA(Ser). Is also able to aminoacylate tRNA(Sec) with serine, to form the misacylated tRNA L-seryl-tRNA(Sec), which will be further converted into selenocysteinyl-tRNA(Sec). The protein is Serine--tRNA ligase of Lactococcus lactis subsp. lactis (strain IL1403) (Streptococcus lactis).